The primary structure comprises 623 residues: Protein vein (623 aa).

Positions 1–40 (MYAQHLRKWSLKTKKQLMPLILLIISYMLLLNTCVLSSSA) are cleaved as a signal peptide. Disordered stretches follow at residues 70–98 (IPLS…SSNN), 130–162 (DAGS…SMQK), 184–214 (AASS…NYSS), and 229–317 (PESM…QRYN). 2 stretches are compositionally biased toward low complexity: residues 72–98 (LSSD…SSNN) and 136–158 (PAQQ…QQQQ). N-linked (GlcNAc...) asparagine glycosylation is present at N76. N211 is a glycosylation site (N-linked (GlcNAc...) asparagine). A compositionally biased stretch (basic and acidic residues) spans 233–248 (LEDRSPEQAARSRRDG). N252 carries an N-linked (GlcNAc...) asparagine glycan. The segment covering 255–267 (RQQQRTGHRQQLQ) has biased composition (low complexity). Basic residues predominate over residues 305 to 316 (QRRKHQRKHQRY). N-linked (GlcNAc...) asparagine glycans are attached at residues N350, N381, N424, N449, N521, and N574. An Ig-like C2-type domain is found at 457–542 (TKIFSKPSKA…AKNKASKAIA (86 aa)). Cystine bridges form between C478–C531, C566–C577, C571–C588, and C590–C599. The EGF-like domain maps to 561-599 (ASGIPCNFDYCFHNGTCRMIPDINEVYCRCPTEYFGNRC).

It localises to the secreted. Functionally, ligand for the EGF receptor. Seems to play a role in the global proliferation of wing disc cells and the larval patterning. Shows a strong synergistic genetic interaction with spi, suggesting a molecular interdependence. Required for the development of interveins cells. The protein is Protein vein (vn) of Drosophila melanogaster (Fruit fly).